The following is a 714-amino-acid chain: GATA zinc finger domain-containing protein 10 (714 aa).

6 disordered regions span residues Tyr28–Ile97, Thr115–Gln180, Met266–Gln362, Gln394–Asp419, Met454–Gln476, and Ile528–Thr621. 2 stretches are compositionally biased toward low complexity: residues Gln30–Asn94 and Gln130–His147. The segment covering Gln148–Gln168 has biased composition (basic residues). Residues His169–Gln180 are compositionally biased toward low complexity. Residues Gly271–Tyr282 show a composition bias toward polar residues. Composition is skewed to low complexity over residues Asn283 to Ile322 and Gln340 to Gln362. Low complexity-rich tracts occupy residues Gln457–Gln476 and Ile528–Asn549. The segment covering Gly550 to Ser569 has biased composition (polar residues). The segment covering Asn570–Asn588 has biased composition (low complexity). Residues Cys631–Cys656 form a GATA-type zinc finger. Residues Ala661–Asp694 are a coiled coil. The span at Leu667 to Ile693 shows a compositional bias: basic and acidic residues. Residues Leu667–Asn714 are disordered. A compositionally biased stretch (polar residues) spans Asn699–Asn714.

The polypeptide is GATA zinc finger domain-containing protein 10 (gtaJ) (Dictyostelium discoideum (Social amoeba)).